Here is a 466-residue protein sequence, read N- to C-terminus: Cell division protein FtsP (466 aa).

The segment at residues 1–28 is a signal peptide (tat-type signal); it reads MGNYSRRRFLQGSLAIVAGNVLPCAAMA.

The protein belongs to the FtsP family. Post-translationally, predicted to be exported by the Tat system. The position of the signal peptide cleavage has not been experimentally proven.

Its subcellular location is the periplasm. Cell division protein that is required for growth during stress conditions. May be involved in protecting or stabilizing the divisomal assembly under conditions of stress. This Gallibacterium anatis (strain UMN179) (Pasteurella anatis) protein is Cell division protein FtsP.